The following is a 616-amino-acid chain: Secretogranin-2 (616 aa).

Residues 1-27 form the signal peptide; it reads MAEAKTHWLGASLSLILLIFLLATAEA. The propeptide occupies 28 to 30; the sequence is ASF. 2 disordered regions span residues 68–104 and 120–146; these read QAHK…RDSL and AENE…PMDM. The span at 92–104 shows a compositional bias: basic and acidic residues; the sequence is ENSDLPESSRDSL. The segment covering 122-140 has biased composition (polar residues); it reads NEPQSSLKENKPYTLNSEK. The residue at position 150 (Tyr-150) is a Sulfotyrosine. 6 positions are modified to phosphoserine: Ser-173, Ser-267, Ser-431, Ser-531, Ser-554, and Ser-555. Positions 255–283 are enriched in basic and acidic residues; it reads KIESQTQEEVRDSKENIEKNEQINDEMKR. The interval 255-290 is disordered; it reads KIESQTQEEVRDSKENIEKNEQINDEMKRSGQMGLQ. Residues 548 to 560 show a composition bias toward basic and acidic residues; that stretch reads ERLNQHSSQETDK. The tract at residues 548 to 582 is disordered; the sequence is ERLNQHSSQETDKLALVSKRLPVATPKSDDAPNRQ.

This sequence belongs to the chromogranin/secretogranin protein family. In terms of assembly, interacts with Secretogranin III/SCG3.

Its subcellular location is the secreted. In terms of biological role, neuroendocrine protein of the granin family that regulates the biogenesis of secretory granules. The chain is Secretogranin-2 (SCG2) from Sus scrofa (Pig).